Here is a 504-residue protein sequence, read N- to C-terminus: Arabinose import ATP-binding protein AraG (504 aa).

2 ABC transporter domains span residues 8-243 (LSFR…MVGR) and 256-499 (YGEE…MPKV). 40 to 47 (GENGAGKS) serves as a coordination point for ATP.

It belongs to the ABC transporter superfamily. Arabinose importer (TC 3.A.1.2.2) family. The complex is composed of two ATP-binding proteins (AraG), two transmembrane proteins (AraH) and a solute-binding protein (AraF).

Its subcellular location is the cell inner membrane. The enzyme catalyses L-arabinose(out) + ATP + H2O = L-arabinose(in) + ADP + phosphate + H(+). Functionally, part of the ABC transporter complex AraFGH involved in arabinose import. Responsible for energy coupling to the transport system. This chain is Arabinose import ATP-binding protein AraG, found in Shigella boydii serotype 4 (strain Sb227).